Reading from the N-terminus, the 1063-residue chain is Valine--tRNA ligase, mitochondrial (1063 aa).

Residues 1–26 (MPHLPLASFRPPFWGLRHSRGLPRFH) constitute a mitochondrion transit peptide. Residues 25-53 (FHSVSTQSEPHGSPISRRNREAKQKRLRE) form a disordered region. Over residues 42–53 (RNREAKQKRLRE) the composition is skewed to basic and acidic residues. The short motif at 146 to 156 (PNVTGSLHIGH) is the 'HIGH' region element. The short motif at 658-662 (KMSKS) is the 'KMSKS' region element. Residue Lys661 coordinates ATP.

Belongs to the class-I aminoacyl-tRNA synthetase family.

It is found in the mitochondrion. The catalysed reaction is tRNA(Val) + L-valine + ATP = L-valyl-tRNA(Val) + AMP + diphosphate. Catalyzes the attachment of valine to tRNA(Val) in a two-step reaction: valine is first activated by ATP to form Val-AMP and then transferred to the acceptor end of tRNA(Val). This is Valine--tRNA ligase, mitochondrial (VARS2) from Homo sapiens (Human).